The chain runs to 233 residues: Transcriptional regulatory protein NatR (233 aa).

A Response regulatory domain is found at 3–117 (KVGLVDDYRV…RLAASFDRYL (115 aa)). A 4-aspartylphosphate modification is found at Asp54. Residues 129–233 (ILIKQKSEMH…QLDYFQNYYF (105 aa)) form the HTH LytTR-type domain.

In terms of processing, phosphorylated by NatK.

The protein resides in the cytoplasm. Member of the two-component regulatory system NatK/NatR that positively regulates the expression of the natAB operon. Acts by binding directly to the promoter of natAB. This is Transcriptional regulatory protein NatR from Bacillus subtilis (strain 168).